The primary structure comprises 804 residues: MNYNHNQIEKKWQDYWDENKTFKTNDNLGQKKFYALDMFPYPSGAGLHVGHPEGYTATDIISRYKRMQGYNVLHPMGWDAFGLPAEQYALDTGNDPREFTKKNIQTFKRQIKELGFSYDWDREVNTTDPEYYKWTQWIFIQLYNKGLAYVDEVAVNWCPALGTVLSNEEVIDGVSERGGHPVYRKPMKQWVLKITEYADQLLADLDDLDWPESLKDMQRNWIGRSEGAKVSFDVDNTEGKVEVFTTRPDTIYGASFLVLSPEHALVNSITTDEYKEKVKAYQTEASKKSDLERTDLAKDKSGVFTGAYAINPLSGEKVQIWIADYVLSTYGTGAIMAVPAHDDRDYEFAKKFDLLIIEVIEGGNVEEAAYTGEGKHINSGELDGLENEAAITKAIQLLEQKGAGEKKVNYKLRDWLFSRQRYWGEPIPVIHWEDGTMTTVPEEELPLLLPETDEIKPSGTGESPLANIDSFVNVVDEKTGMKGRRETNTMPQWAGSCWYYLRYIDPKNENMLADPEKLKHWLPVDLYIGGVEHAVLHLLYARFWHKVLYDLGIVPTKEPFQKLFNQGMILGEGNEKMSKSKGNVINPDDIVQSHGADTLRLYEMFMGPLDAAIAWSEKGLDGSRRFLDRVWRLIVNEDGTLSSKIVTTNNKSLDKVYNQTVKKVTDDFETLGFNTAISQLMVFINECYKVDEVYKPYIEGFVKMLAPIAPHIGEELWSKLGHEESITYQPWPTYDEALLVDDEVEIVVQVNGKLRAKIKIAKDTSKEEMQEIALSNDNVKASIEGKDIMKVIAVPQKLVNIVAK.

Residues 40 to 51 (PYPSGAGLHVGH) carry the 'HIGH' region motif. The 'KMSKS' region motif lies at 576–580 (KMSKS). Lysine 579 is a binding site for ATP.

It belongs to the class-I aminoacyl-tRNA synthetase family.

The protein localises to the cytoplasm. The catalysed reaction is tRNA(Leu) + L-leucine + ATP = L-leucyl-tRNA(Leu) + AMP + diphosphate. This is Leucine--tRNA ligase from Staphylococcus aureus (strain bovine RF122 / ET3-1).